The chain runs to 68 residues: Kasstasin (68 aa).

Positions 1–20 are cleaved as a signal peptide; sequence MMKKSMLLLFFLGMVSFSLA. The propeptide occupies 21 to 44; that stretch reads DDKREDEGEEKRADEGEEKRAAEE. The segment at 22–41 is disordered; the sequence is DKREDEGEEKRADEGEEKRA. Lysine amide is present on K67.

The protein belongs to the frog skin active peptide (FSAP) family. Brevinin subfamily. As to expression, expressed by the skin dorsal glands.

It is found in the secreted. In terms of biological role, peptide with potent vasoconstrictor properties (EC50=25 pM). Has moderate antimicrobial activity against Gram-positive bacterium S.aureus (MIC=55 uM) and against Gram-negative bacterium E.coli (MIC=110 uM). Not active against fungus C.albicans. Has weak hemolytic activity against horse erythrocytes. The polypeptide is Kasstasin (Phlyctimantis maculatus (Red-legged running frog)).